The chain runs to 200 residues: NAD--protein ADP-ribosyltransferase modA (200 aa).

Arg72 serves as a coordination point for NAD(+). Residue Glu165 is part of the active site.

Belongs to the Tevenvirinae NAD--protein ADP-ribosyltransferase modA family.

It is found in the virion. The catalysed reaction is L-arginyl-[protein] + NAD(+) = N(omega)-(ADP-D-ribosyl)-L-arginyl-[protein] + nicotinamide + H(+). ADP-ribosyltransferase that efficiently ADP-ribosylates both alpha subunits of host RNA polymerase RPOA. The ModA-induced ADP-ribosylation of RPOA alpha subunits inhibits transcription from viral early promoters. This is NAD--protein ADP-ribosyltransferase modA from Enterobacteria phage T4 (Bacteriophage T4).